The following is a 454-amino-acid chain: Oxygen-dependent coproporphyrinogen-III oxidase, mitochondrial (454 aa).

The N-terminal 110 residues, 1 to 110, are a transit peptide targeting the mitochondrion; sequence MALQLGRLSS…MLPKTSGTRA (110 aa). Residues 43–70 form a disordered region; it reads AAGRVCRPPGPAGTEQSRGLGHGSTSRG. At serine 112 the chain carries Phosphoserine. Residues 193–202 are important for dimerization; sequence VLQDGCVFEK. Serine 244 is a coproporphyrinogen III binding site. Residue histidine 258 is the Proton donor of the active site. 260–262 provides a ligand contact to coproporphyrinogen III; it reads NYR. The tract at residues 392 to 428 is important for dimerization; the sequence is YVEFNLLYDRGTKFGLFTPGSRIESILMSLPLTARWE. N6-acetyllysine; alternate is present on lysine 404. Lysine 404 carries the N6-succinyllysine; alternate modification. 411–413 lines the coproporphyrinogen III pocket; sequence GSR.

It belongs to the aerobic coproporphyrinogen-III oxidase family. As to quaternary structure, homodimer.

It localises to the mitochondrion intermembrane space. It carries out the reaction coproporphyrinogen III + O2 + 2 H(+) = protoporphyrinogen IX + 2 CO2 + 2 H2O. The protein operates within porphyrin-containing compound metabolism; protoporphyrin-IX biosynthesis; protoporphyrinogen-IX from coproporphyrinogen-III (O2 route): step 1/1. Its function is as follows. Catalyzes the aerobic oxidative decarboxylation of propionate groups of rings A and B of coproporphyrinogen-III to yield the vinyl groups in protoporphyrinogen-IX and participates to the sixth step in the heme biosynthetic pathway. The protein is Oxygen-dependent coproporphyrinogen-III oxidase, mitochondrial of Homo sapiens (Human).